The sequence spans 130 residues: Mitochondrial import protein 1 (130 aa).

The disordered stretch occupies residues 1–41 (MSAEEISNPLAESGVTISSDSEQYSAPESASPQSPSSSSPA). A compositionally biased stretch (polar residues) spans 15–24 (VTISSDSEQY). Residues 25-41 (SAPESASPQSPSSSSPA) show a composition bias toward low complexity.

The protein belongs to the MIM1 family.

Its subcellular location is the mitochondrion outer membrane. Its function is as follows. Required for the assembly of the TOM (translocase of outer membrane) receptor complex, which is responsible for the recognition and translocation of cytosolically synthesized mitochondrial preproteins. The sequence is that of Mitochondrial import protein 1 from Neurospora crassa (strain ATCC 24698 / 74-OR23-1A / CBS 708.71 / DSM 1257 / FGSC 987).